The following is a 460-amino-acid chain: tRNA modification GTPase MnmE (460 aa).

Positions 29, 91, and 132 each coordinate (6S)-5-formyl-5,6,7,8-tetrahydrofolate. A TrmE-type G domain is found at 227–383 (GISIALIGKT…LIDTIIKKCG (157 aa)). Asn237 lines the K(+) pocket. GTP contacts are provided by residues 237-242 (NVGKSS), 256-262 (TNIPGTT), and 281-284 (DTAG). Residue Ser241 participates in Mg(2+) binding. K(+) is bound by residues Thr256, Ile258, and Thr261. A Mg(2+)-binding site is contributed by Thr262. Lys460 lines the (6S)-5-formyl-5,6,7,8-tetrahydrofolate pocket.

It belongs to the TRAFAC class TrmE-Era-EngA-EngB-Septin-like GTPase superfamily. TrmE GTPase family. Homodimer. Heterotetramer of two MnmE and two MnmG subunits. K(+) is required as a cofactor.

The protein localises to the cytoplasm. Its function is as follows. Exhibits a very high intrinsic GTPase hydrolysis rate. Involved in the addition of a carboxymethylaminomethyl (cmnm) group at the wobble position (U34) of certain tRNAs, forming tRNA-cmnm(5)s(2)U34. The sequence is that of tRNA modification GTPase MnmE from Prochlorococcus marinus (strain AS9601).